A 345-amino-acid chain; its full sequence is Aspartate--ammonia ligase (345 aa).

The protein belongs to the class-II aminoacyl-tRNA synthetase family. AsnA subfamily.

Its subcellular location is the cytoplasm. It carries out the reaction L-aspartate + NH4(+) + ATP = L-asparagine + AMP + diphosphate + H(+). Its pathway is amino-acid biosynthesis; L-asparagine biosynthesis; L-asparagine from L-aspartate (ammonia route): step 1/1. The protein is Aspartate--ammonia ligase of Parabacteroides distasonis (strain ATCC 8503 / DSM 20701 / CIP 104284 / JCM 5825 / NCTC 11152).